The chain runs to 84 residues: Small ribosomal subunit protein uS17 (84 aa).

The protein belongs to the universal ribosomal protein uS17 family. In terms of assembly, part of the 30S ribosomal subunit.

In terms of biological role, one of the primary rRNA binding proteins, it binds specifically to the 5'-end of 16S ribosomal RNA. The chain is Small ribosomal subunit protein uS17 from Aliivibrio salmonicida (strain LFI1238) (Vibrio salmonicida (strain LFI1238)).